Reading from the N-terminus, the 263-residue chain is Trem-like transcript 4 protein (263 aa).

The first 28 residues, 1–28 (MAWRYSQLLLVPVQLVFLASVCCPGVWG), serve as a signal peptide directing secretion. Positions 29 to 132 (STVSEELHRM…LREVTVLRNI (104 aa)) constitute an Ig-like V-type domain. At 29–200 (STVSEELHRM…GWTSPGLLVS (172 aa)) the chain is on the extracellular side. A disulfide bridge connects residues C47 and C116. Residue N100 is glycosylated (N-linked (GlcNAc...) asparagine). Residues 168 to 191 (SPEETTDSSINGTGHRNQSSSSPG) are disordered. A helical transmembrane segment spans residues 201–221 (VQYGLLLLKALMLSVFCVLLC). Over 222 to 263 (WRSGQGREYMAETMELSKLPHISKSLDTVSHISGYEKKANWY) the chain is Cytoplasmic.

In terms of assembly, interacts with TYROBP/DAP12. In terms of tissue distribution, predominantly expressed in spleen, with highest levels on selected populations of macrophages, including red pulp macrophages, and on subsets of dendritic cells (DC), mostly on CD8alpha(+) DC (at protein level). Also expressed on blood and spleen Ly6C(low) monocytes (at protein level). Not expressed on lymphocytes or granulocytes (at protein level).

It is found in the cell membrane. Functionally, positively regulates Toll-like receptor signaling via TLR7, TLR9 and TLR13 in neutrophils and splenic macrophages. Regulates TLR7 signaling by controlling ligand-induced recruitment of TLR7 from the endoplasmic reticulum to endosomes and lysosomes. Positively regulates Toll-like receptor TLR9-induced production of inflammatory cytokines but is dispensable for IFNB1 production. Involved in the anti-viral response to several viruses including influenza virus, vesicular stomatitis virus and cytomegalovirus. Binds to late apoptotic, and necrotic cells, but not living or early apoptotic cells, but is not essential for uptake of dying cells by dendritic cells (DCs). Does not bind nucleic acids. May participate in antigen presentation. This is Trem-like transcript 4 protein (Treml4) from Mus musculus (Mouse).